The sequence spans 206 residues: Thiamine-phosphate synthase (206 aa).

Residues glutamine 38–lysine 42 and asparagine 70 each bind 4-amino-2-methyl-5-(diphosphooxymethyl)pyrimidine. Residues aspartate 71 and aspartate 90 each coordinate Mg(2+). Position 107 (serine 107) interacts with 4-amino-2-methyl-5-(diphosphooxymethyl)pyrimidine. Residue threonine 133–threonine 135 participates in 2-[(2R,5Z)-2-carboxy-4-methylthiazol-5(2H)-ylidene]ethyl phosphate binding. Lysine 136 contacts 4-amino-2-methyl-5-(diphosphooxymethyl)pyrimidine. 2-[(2R,5Z)-2-carboxy-4-methylthiazol-5(2H)-ylidene]ethyl phosphate is bound by residues glycine 164 and valine 184 to serine 185.

Belongs to the thiamine-phosphate synthase family. The cofactor is Mg(2+).

It catalyses the reaction 2-[(2R,5Z)-2-carboxy-4-methylthiazol-5(2H)-ylidene]ethyl phosphate + 4-amino-2-methyl-5-(diphosphooxymethyl)pyrimidine + 2 H(+) = thiamine phosphate + CO2 + diphosphate. The catalysed reaction is 2-(2-carboxy-4-methylthiazol-5-yl)ethyl phosphate + 4-amino-2-methyl-5-(diphosphooxymethyl)pyrimidine + 2 H(+) = thiamine phosphate + CO2 + diphosphate. It carries out the reaction 4-methyl-5-(2-phosphooxyethyl)-thiazole + 4-amino-2-methyl-5-(diphosphooxymethyl)pyrimidine + H(+) = thiamine phosphate + diphosphate. It participates in cofactor biosynthesis; thiamine diphosphate biosynthesis; thiamine phosphate from 4-amino-2-methyl-5-diphosphomethylpyrimidine and 4-methyl-5-(2-phosphoethyl)-thiazole: step 1/1. Its function is as follows. Condenses 4-methyl-5-(beta-hydroxyethyl)thiazole monophosphate (THZ-P) and 2-methyl-4-amino-5-hydroxymethyl pyrimidine pyrophosphate (HMP-PP) to form thiamine monophosphate (TMP). The polypeptide is Thiamine-phosphate synthase (Herpetosiphon aurantiacus (strain ATCC 23779 / DSM 785 / 114-95)).